The primary structure comprises 161 residues: Cytochrome c-type biogenesis protein CcmE (161 aa).

Residues 1-8 (MNPRRKKR) lie on the Cytoplasmic side of the membrane. Residues 9–29 (LTLAIALIGGVAAIASLLLYA) form a helical; Signal-anchor for type II membrane protein membrane-spanning segment. Residues 30–161 (LNSNLNLFYT…DYSQQKSAAQ (132 aa)) are Periplasmic-facing. Heme contacts are provided by His131 and Tyr135. The interval 138–161 (PEVAEAMGQKHEKLDYSQQKSAAQ) is disordered.

This sequence belongs to the CcmE/CycJ family.

The protein localises to the cell inner membrane. Functionally, heme chaperone required for the biogenesis of c-type cytochromes. Transiently binds heme delivered by CcmC and transfers the heme to apo-cytochromes in a process facilitated by CcmF and CcmH. The chain is Cytochrome c-type biogenesis protein CcmE from Shewanella sp. (strain MR-4).